Consider the following 199-residue polypeptide: Recombination protein RecR (199 aa).

Residues cysteine 57 to cysteine 72 form a C4-type zinc finger. The region spanning aspartate 81–proline 176 is the Toprim domain.

Belongs to the RecR family.

Functionally, may play a role in DNA repair. It seems to be involved in an RecBC-independent recombinational process of DNA repair. It may act with RecF and RecO. This is Recombination protein RecR from Shewanella amazonensis (strain ATCC BAA-1098 / SB2B).